The chain runs to 970 residues: Protein bicaudal C homolog 1-B (970 aa).

The segment at 1 to 50 (MAAQCGGYMNQSDPGSNSERSADSPLPGSEDDSPGSAAPHDPEWREERFR) is disordered. A compositionally biased stretch (polar residues) spans 9 to 19 (MNQSDPGSNSE). Over residues 40–50 (HDPEWREERFR) the composition is skewed to basic and acidic residues. KH domains lie at 130 to 197 (RVTL…RVRI) and 282 to 346 (PVST…RQYL). The segment covering 596–605 (EASRQSNNHS) has biased composition (polar residues). Disordered stretches follow at residues 596 to 638 (EASR…SANT), 677 to 696 (SDSE…APGS), and 773 to 841 (RRAN…NKSA). Basic and acidic residues predominate over residues 606–616 (SAEEVNSKTDS). Polar residues-rich tracts occupy residues 783-810 (TMST…GSDS) and 819-831 (IDSS…SSIG). Positions 869 to 932 (FKGSDLPELF…LLAISELNKN (64 aa)) constitute an SAM domain.

The protein belongs to the BicC family.

Putative RNA-binding protein. May be involved in regulating gene expression during embryonic development. Seems to be involved in endoderm formation. Ectopic expression results in endoderm formation in the absence of mesoderm induction. The chain is Protein bicaudal C homolog 1-B (bicc1-b) from Xenopus laevis (African clawed frog).